The chain runs to 110 residues: Serum amyloid A protein (110 aa).

A disordered region spans residues 73–110 (GGSGRGAEDSRADQAANEWGRSGKDPNHFRPHGLPDKY). Residues 93 to 110 (RSGKDPNHFRPHGLPDKY) show a composition bias toward basic and acidic residues.

It belongs to the SAA family. In terms of processing, this protein is the precursor of amyloid protein A, which is formed by the removal of residues from the C-terminal end. As to expression, expressed by the liver; secreted in plasma.

Major acute phase reactant. Apolipoprotein of the HDL complex. The protein is Serum amyloid A protein (SAA1) of Equus caballus (Horse).